Here is a 143-residue protein sequence, read N- to C-terminus: UPF0201 protein Msed_1787 (143 aa).

The protein belongs to the UPF0201 family.

In Metallosphaera sedula (strain ATCC 51363 / DSM 5348 / JCM 9185 / NBRC 15509 / TH2), this protein is UPF0201 protein Msed_1787.